Here is a 271-residue protein sequence, read N- to C-terminus: Calretinin (271 aa).

EF-hand domains are found at residues 16 to 51, 63 to 98, 107 to 142, 151 to 186, 195 to 230, and 235 to 270; these read LTAS…LEKA, NFGE…EENF, GSSA…LLKK, KLQE…QENF, LTSE…LYEK, and MNIQ…SEPP. The Ca(2+) site is built by aspartate 29, aspartate 31, asparagine 33, tyrosine 35, glutamate 40, aspartate 76, asparagine 78, aspartate 80, lysine 82, glutamate 87, aspartate 120, aspartate 122, serine 124, tyrosine 126, glutamate 131, aspartate 164, asparagine 166, aspartate 168, lysine 170, glutamate 175, aspartate 208, aspartate 210, serine 212, tyrosine 214, and glutamate 219. Phosphotyrosine is present on tyrosine 214.

This sequence belongs to the calbindin family. As to expression, widely expressed in central nervous system. Expressed in type I unipolar brush cells of the cerebellum (at protein level).

The protein localises to the synapse. Its subcellular location is the cell projection. It localises to the dendrite. Its function is as follows. Calcium-binding protein involved in calcium homeostasis and signal transduction. It plays a critical role in buffering intracellular calcium levels and modulating calcium-dependent signaling pathways. Predominantly expressed in specific neuronal populations, influences synaptic plasticity and neuronal excitability, contributing to learning and memory. During embryonic development, it facilitates neuronal differentiation and maturation. The polypeptide is Calretinin (Calb2) (Mus musculus (Mouse)).